Reading from the N-terminus, the 385-residue chain is tRNA-specific 2-thiouridylase MnmA (385 aa).

ATP is bound by residues 18-25 (AMSGGVDS) and Leu44. Cys112 functions as the Nucleophile in the catalytic mechanism. Cys112 and Cys209 form a disulfide bridge. Position 136 (Gly136) interacts with ATP. The interaction with tRNA stretch occupies residues 159 to 161 (RDQ). The active-site Cysteine persulfide intermediate is Cys209.

The protein belongs to the MnmA/TRMU family.

It is found in the cytoplasm. The catalysed reaction is S-sulfanyl-L-cysteinyl-[protein] + uridine(34) in tRNA + AH2 + ATP = 2-thiouridine(34) in tRNA + L-cysteinyl-[protein] + A + AMP + diphosphate + H(+). In terms of biological role, catalyzes the 2-thiolation of uridine at the wobble position (U34) of tRNA, leading to the formation of s(2)U34. The polypeptide is tRNA-specific 2-thiouridylase MnmA (Methylorubrum extorquens (strain PA1) (Methylobacterium extorquens)).